A 932-amino-acid chain; its full sequence is DNA mismatch repair protein MutS (932 aa).

Position 615–622 (615–622 (GPNMAGKS)) interacts with ATP.

It belongs to the DNA mismatch repair MutS family.

In terms of biological role, this protein is involved in the repair of mismatches in DNA. It is possible that it carries out the mismatch recognition step. This protein has a weak ATPase activity. The polypeptide is DNA mismatch repair protein MutS (Clostridium botulinum (strain Langeland / NCTC 10281 / Type F)).